The primary structure comprises 926 residues: Translation initiation factor IF-2 (926 aa).

Disordered stretches follow at residues 1-185 (MTDS…EEVE) and 200-299 (EDKA…RRRG). Low complexity-rich tracts occupy residues 13-24 (TGKKTLTLKPTG) and 70-96 (APATAAAAPVQTPAPVQAPAPVAAAPQ). The segment covering 110-133 (TNQYSQQRHPGQQNRPQASSQPSR) has biased composition (polar residues). Residues 151–185 (MDARRRALAEAQVREVEDAKRRAEEEVRRQAEEVE) are compositionally biased toward basic and acidic residues. Over residues 211-251 (APEPVAEPVAPVAETPRAADPAPRAPSPAGAKPAAGAPAPS) the composition is skewed to low complexity. In terms of domain architecture, tr-type G spans 424–591 (SRPPVVTIMG…AVLLQAEILD (168 aa)). Residues 433–440 (GHVDHGKT) form a G1 region. 433–440 (GHVDHGKT) contributes to the GTP binding site. Residues 458–462 (GITQH) form a G2 region. Positions 479–482 (DTPG) are G3. GTP is bound by residues 479-483 (DTPGH) and 533-536 (NKID). Residues 533–536 (NKID) are G4. The interval 569–571 (SAK) is G5.

This sequence belongs to the TRAFAC class translation factor GTPase superfamily. Classic translation factor GTPase family. IF-2 subfamily.

It localises to the cytoplasm. One of the essential components for the initiation of protein synthesis. Protects formylmethionyl-tRNA from spontaneous hydrolysis and promotes its binding to the 30S ribosomal subunits. Also involved in the hydrolysis of GTP during the formation of the 70S ribosomal complex. This Allorhizobium ampelinum (strain ATCC BAA-846 / DSM 112012 / S4) (Agrobacterium vitis (strain S4)) protein is Translation initiation factor IF-2.